A 357-amino-acid polypeptide reads, in one-letter code: SrfA-induced gene J protein (357 aa).

The tract at residues 1-29 is disordered; the sequence is MGRVEDQIKDNYNSLSHEGERLNREAKIE. Residues 5-51 are a coiled coil; the sequence is EDQIKDNYNSLSHEGERLNREAKIESEKLKNNAKLDAKDMKKDIDES. Over residues 17 to 29 the composition is skewed to basic and acidic residues; it reads HEGERLNREAKIE. N-linked (GlcNAc...) asparagine glycans are attached at residues asparagine 114, asparagine 157, and asparagine 172. 2 coiled-coil regions span residues 150 to 177 and 223 to 270; these read KNFK…SNKI and DETK…DAIE. A helical transmembrane segment spans residues 290-307; sequence IWGSIGLIGGATATSYLF.

The protein resides in the membrane. The sequence is that of SrfA-induced gene J protein (sigJ) from Dictyostelium discoideum (Social amoeba).